The sequence spans 229 residues: Aminodeoxyfutalosine nucleosidase (229 aa).

Residue E13 is the Proton acceptor of the active site. Residues G79, I153, and 173 to 174 (ME) contribute to the substrate site. D197 (proton donor) is an active-site residue.

The protein belongs to the PNP/UDP phosphorylase family. Homodimer.

The enzyme catalyses 6-amino-6-deoxyfutalosine + H2O = dehypoxanthine futalosine + adenine. It carries out the reaction S-adenosyl-L-homocysteine + H2O = S-(5-deoxy-D-ribos-5-yl)-L-homocysteine + adenine. The catalysed reaction is S-methyl-5'-thioadenosine + H2O = 5-(methylsulfanyl)-D-ribose + adenine. It catalyses the reaction 5'-deoxyadenosine + H2O = 5-deoxy-D-ribose + adenine. It functions in the pathway quinol/quinone metabolism; menaquinone biosynthesis. Its pathway is amino-acid biosynthesis; L-methionine biosynthesis via salvage pathway; S-methyl-5-thio-alpha-D-ribose 1-phosphate from S-methyl-5'-thioadenosine (hydrolase route): step 1/2. Functionally, catalyzes the direct conversion of aminodeoxyfutalosine (AFL) into dehypoxanthine futalosine (DHFL) and adenine via the hydrolysis of the N-glycosidic bond; this reaction seems to represent an essential step in the menaquinone biosynthesis pathway in Campylobacter species. Also catalyzes the hydrolysis of 5'-methylthioadenosine (MTA) to adenine and 5'-methylthioribose. Can also probably use S-adenosylhomocysteine (SAH) as substrate, leading to adenine and S-ribosylhomocysteine. These other activities highlight the tremendous versatility of the enzyme, which also plays key roles in S-adenosylmethionine recycling and in the biosynthesis of the quorum-sensing molecule autoinducer-2. Shows negligible activity with futalosine (FL) as substrate. The sequence is that of Aminodeoxyfutalosine nucleosidase (pfs) from Campylobacter jejuni subsp. jejuni serotype O:2 (strain ATCC 700819 / NCTC 11168).